The following is a 109-amino-acid chain: Fluoride-specific ion channel FluC (109 aa).

3 helical membrane passes run 21 to 41 (FFLNNNLLVGVIGSFVYGFVI), 52 to 72 (ILLTGFCSCFTSFSGFVLFLY), and 83 to 103 (LFFYLNIIIVLNLIIMYAGFL).

The protein belongs to the fluoride channel Fluc/FEX (TC 1.A.43) family.

Its subcellular location is the cell inner membrane. The enzyme catalyses fluoride(in) = fluoride(out). In terms of biological role, fluoride-specific ion channel. Important for reducing fluoride concentration in the cell, thus reducing its toxicity. This is Fluoride-specific ion channel FluC from Prochlorococcus marinus (strain MIT 9515).